The chain runs to 341 residues: Methionine import ATP-binding protein MetN 1 (341 aa).

The ABC transporter domain occupies 2 to 241; it reads IEFKNVNKVF…PQTNTAKNFV (240 aa). Residue 38–45 participates in ATP binding; that stretch reads GYSGAGKS.

It belongs to the ABC transporter superfamily. Methionine importer (TC 3.A.1.24) family. As to quaternary structure, the complex is composed of two ATP-binding proteins (MetN), two transmembrane proteins (MetI) and a solute-binding protein (MetQ).

It is found in the cell membrane. The catalysed reaction is L-methionine(out) + ATP + H2O = L-methionine(in) + ADP + phosphate + H(+). The enzyme catalyses D-methionine(out) + ATP + H2O = D-methionine(in) + ADP + phosphate + H(+). Functionally, part of the ABC transporter complex MetNIQ involved in methionine import. Responsible for energy coupling to the transport system. This chain is Methionine import ATP-binding protein MetN 1, found in Staphylococcus epidermidis (strain ATCC 35984 / DSM 28319 / BCRC 17069 / CCUG 31568 / BM 3577 / RP62A).